Reading from the N-terminus, the 261-residue chain is Probable membrane transporter protein ORF9 (261 aa).

A run of 8 helical transmembrane segments spans residues Leu-8–Gly-28, Gly-29–Gly-49, Leu-78–Val-98, Gly-100–Leu-120, Val-133–Gly-151, Val-152–Phe-171, Val-189–Met-209, and Ile-231–Pro-251.

This sequence belongs to the 4-toluene sulfonate uptake permease (TSUP) (TC 2.A.102) family.

The protein resides in the cell membrane. This Sinorhizobium sp protein is Probable membrane transporter protein ORF9.